Reading from the N-terminus, the 222-residue chain is UPF0758 protein TM_1557 (222 aa).

Residues 101 to 222 enclose the MPN domain; that stretch reads KLDSSVKVYK…YFSFREEGEL (122 aa). Positions 171, 173, and 184 each coordinate Zn(2+). A JAMM motif motif is present at residues 171 to 184; that stretch reads HNHPSGDPTPSKED.

The protein belongs to the UPF0758 family.

This chain is UPF0758 protein TM_1557, found in Thermotoga maritima (strain ATCC 43589 / DSM 3109 / JCM 10099 / NBRC 100826 / MSB8).